The sequence spans 496 residues: MRTNPTTSSPVVSTLEEKNLGRIAQIIGPVLDVVFPPGKMPNIYNALVVKGRDTVQINVTCEVQQLLGNNRVRAVAMSATDGLMRGMEVIDTGAPLSVPVGGATLGRIFNVLGEPVDNLGPVDTRTTSPIHRSAPAFIQLDTKFSIFETGIKVVDLLAPYRRGGKIGLFGGAGVGKTVLIMELINNIAKAHGGVSVFGGVGERTREGNDLYMEMKESGVINEKNIAESKVALVYGQMNEPPGARMRVGLTALTMAEYFRDVNEQDVLLFIDNIFRFVQAGSEVSALLGRMPSAVGYQPTLSTEMGSLQERITSTKEGSITSIQAVYVPADDLTDPAPATTFAHLDATTVLSRVLAAKGIYPAVDPLDSTSTMLQPRIVGEEHYETAQRVKQTSQRYKELQDIIAILGLDELSEEDRLTVARARKIERFLSQPFFVAEVFTGSPGKYVGLGETIRGFQLILSGELDGLPEQAFYLVGNIDEATAKAMNLEVESKLKK.

ATP is bound at residue Gly-170–Thr-177.

Belongs to the ATPase alpha/beta chains family. F-type ATPases have 2 components, CF(1) - the catalytic core - and CF(0) - the membrane proton channel. CF(1) has five subunits: alpha(3), beta(3), gamma(1), delta(1), epsilon(1). CF(0) has four main subunits: a(1), b(1), b'(1) and c(9-12).

It localises to the plastid. Its subcellular location is the chloroplast thylakoid membrane. It catalyses the reaction ATP + H2O + 4 H(+)(in) = ADP + phosphate + 5 H(+)(out). Functionally, produces ATP from ADP in the presence of a proton gradient across the membrane. The catalytic sites are hosted primarily by the beta subunits. In Trachycarpus fortunei (Chinese windmill palm), this protein is ATP synthase subunit beta, chloroplastic.